The following is a 252-amino-acid chain: ATP synthase subunit a, chloroplastic (252 aa).

A run of 5 helical transmembrane segments spans residues 41 to 61 (GQVL…TLLA), 100 to 120 (VPFL…GALL), 138 to 158 (DINT…YAGI), 204 to 224 (LIVG…LMLL), and 225 to 245 (GVFT…AYIG).

Belongs to the ATPase A chain family. As to quaternary structure, F-type ATPases have 2 components, CF(1) - the catalytic core - and CF(0) - the membrane proton channel. CF(1) has five subunits: alpha(3), beta(3), gamma(1), delta(1), epsilon(1). CF(0) has four main subunits: a, b, b' and c.

It localises to the plastid. The protein localises to the chloroplast thylakoid membrane. Functionally, key component of the proton channel; it plays a direct role in the translocation of protons across the membrane. This is ATP synthase subunit a, chloroplastic from Oedogonium cardiacum (Filamentous green alga).